Reading from the N-terminus, the 185-residue chain is Elongation factor P (185 aa).

Belongs to the elongation factor P family.

The protein localises to the cytoplasm. The protein operates within protein biosynthesis; polypeptide chain elongation. Its function is as follows. Involved in peptide bond synthesis. Stimulates efficient translation and peptide-bond synthesis on native or reconstituted 70S ribosomes in vitro. Probably functions indirectly by altering the affinity of the ribosome for aminoacyl-tRNA, thus increasing their reactivity as acceptors for peptidyl transferase. This chain is Elongation factor P, found in Alkaliphilus metalliredigens (strain QYMF).